A 577-amino-acid chain; its full sequence is 5'-nucleotidase (577 aa).

A signal peptide spans 1-30; sequence MPRVPSASATGSSALLSLLCAFSLGRAAPF. Asp-39, His-41, Asp-86, and Asn-118 together coordinate Zn(2+). Asn-135 is a glycosylation site (N-linked (GlcNAc...) asparagine). Zn(2+) is bound by residues His-221 and His-244. Asn-246 contributes to the substrate binding site. N-linked (GlcNAc...) asparagine glycosylation is found at Asn-311 and Asn-347. 2 cysteine pairs are disulfide-bonded: Cys-353/Cys-358 and Cys-365/Cys-387. Arg-354 is a substrate binding site. 2 residues coordinate substrate: Gln-390 and Arg-395. An N-linked (GlcNAc...) asparagine glycan is attached at Asn-403. Phe-417 is a substrate binding site. A disulfide bridge links Cys-476 with Cys-479. Residue 500-506 participates in substrate binding; it reads YIAEGGD. Residue Ser-552 is the site of GPI-anchor amidated serine attachment. The propeptide at 553-577 is removed in mature form; that stretch reads ATLPIINLKIGLSLFAFLTWFLHCS.

The protein belongs to the 5'-nucleotidase family. In terms of assembly, homodimer. Zn(2+) serves as cofactor.

Its subcellular location is the cell membrane. The catalysed reaction is a ribonucleoside 5'-phosphate + H2O = a ribonucleoside + phosphate. Functionally, hydrolyzes extracellular nucleotides into membrane permeable nucleosides. This is 5'-nucleotidase from Diplobatis ommata (Ocellated electric ray).